The chain runs to 98 residues: Small ribosomal subunit protein uS17 (98 aa).

Belongs to the universal ribosomal protein uS17 family. In terms of assembly, part of the 30S ribosomal subunit.

One of the primary rRNA binding proteins, it binds specifically to the 5'-end of 16S ribosomal RNA. This Leptothrix cholodnii (strain ATCC 51168 / LMG 8142 / SP-6) (Leptothrix discophora (strain SP-6)) protein is Small ribosomal subunit protein uS17.